Here is a 175-residue protein sequence, read N- to C-terminus: Translation initiation factor IF-3 (175 aa).

The protein belongs to the IF-3 family. In terms of assembly, monomer.

Its subcellular location is the cytoplasm. Functionally, IF-3 binds to the 30S ribosomal subunit and shifts the equilibrium between 70S ribosomes and their 50S and 30S subunits in favor of the free subunits, thus enhancing the availability of 30S subunits on which protein synthesis initiation begins. The polypeptide is Translation initiation factor IF-3 (Chlamydia trachomatis serovar D (strain ATCC VR-885 / DSM 19411 / UW-3/Cx)).